The sequence spans 231 residues: Large ribosomal subunit protein uL1 (231 aa).

It belongs to the universal ribosomal protein uL1 family. Part of the 50S ribosomal subunit.

Functionally, binds directly to 23S rRNA. The L1 stalk is quite mobile in the ribosome, and is involved in E site tRNA release. Protein L1 is also a translational repressor protein, it controls the translation of the L11 operon by binding to its mRNA. This Carboxydothermus hydrogenoformans (strain ATCC BAA-161 / DSM 6008 / Z-2901) protein is Large ribosomal subunit protein uL1.